The sequence spans 193 residues: uncharacterized protein (193 aa).

This is an uncharacterized protein from Mycoplasma genitalium (strain ATCC 33530 / DSM 19775 / NCTC 10195 / G37) (Mycoplasmoides genitalium).